A 279-amino-acid chain; its full sequence is ATP-dependent Clp protease proteolytic subunit-related protein 2, chloroplastic (279 aa).

The N-terminal 54 residues, 1-54, are a transit peptide targeting the chloroplast; the sequence is MAVSFNTTLHQPSLSPSCSIKLYSGLKPQSASFLASGYQNLNKEFYGRVYKSLQ.

It belongs to the peptidase S14 family. Component of the chloroplastic Clp protease core complex which consist of at least 16 proteins: CLPP4 (3 copies), CLPP5 (3 copies), CLPR4 (2 copies), ClpP1 (1 copy), CLPP6 (1 copy), CLPR2 (1 copy), CLPT1 (1 copy), CLPT2 (1 copy) and 3 copies of CLPP3 and/or CLPR1 and/or CLPR3. The core complex is organized in two heptameric rings, one containing CLPP3,4,5,6 in a 1:2:3:1 ratio and the other CLPP1 and CLPR1,2,3,4 in a 3:1:1:1:1 ratio. In terms of tissue distribution, expressed at least in leaves and roots.

The protein resides in the plastid. It is found in the chloroplast. Its function is as follows. Required for chloroplast development and integrity. Involved in the regulation of plastoglobules formation. The chain is ATP-dependent Clp protease proteolytic subunit-related protein 2, chloroplastic from Arabidopsis thaliana (Mouse-ear cress).